The following is an 803-amino-acid chain: PR domain zinc finger protein 4 (803 aa).

In terms of domain architecture, SET spans 408–532 (KQLVLRQSIV…PESELLFYYS (125 aa)). 5 C2H2-type zinc fingers span residues 593 to 615 (WKCS…FMGH), 621 to 643 (HKCD…LKIH), 649 to 671 (YRCT…MVIH), 677 to 699 (LKCD…VLIH), and 705 to 727 (IKCP…LNSH). The C2H2-type 6; degenerate zinc-finger motif lies at 733-755 (YVCEKCTKAYLTKYHLTRHLKTC). Residues 757-803 (EPSSSSSAQEEEDDESEEEDLADSMRTEDCRMGSAVYSTDESLSAHK) are disordered. The span at 765-778 (QEEEDDESEEEDLA) shows a compositional bias: acidic residues. Polar residues predominate over residues 792–803 (VYSTDESLSAHK).

This sequence belongs to the class V-like SAM-binding methyltransferase superfamily.

It localises to the nucleus. In terms of biological role, may function as a transcription factor involved in cell differentiation. The sequence is that of PR domain zinc finger protein 4 (Prdm4) from Mus musculus (Mouse).